We begin with the raw amino-acid sequence, 525 residues long: Squalene epoxidase 3 (525 aa).

A helical membrane pass occupies residues 9 to 29 (HCILTTTFVASLFAFLLLYVL). Residues 64–65 (VA), 84–85 (ER), Arg92, Arg163, Val179, Asp341, and Met354 each bind FAD. 2 helical membrane-spanning segments follow: residues 452-472 (LVLHFFAVAIFGVGRLLVPLP) and 477-497 (LWLGARLISSASGIIFPIIKA).

It belongs to the squalene monooxygenase family. Requires FAD as cofactor. Expressed in seedlings, leaves, stems, inflorescences and siliques.

It is found in the membrane. It carries out the reaction squalene + reduced [NADPH--hemoprotein reductase] + O2 = (S)-2,3-epoxysqualene + oxidized [NADPH--hemoprotein reductase] + H2O + H(+). It functions in the pathway terpene metabolism; lanosterol biosynthesis; lanosterol from farnesyl diphosphate: step 2/3. Its function is as follows. Catalyzes the stereospecific oxidation of squalene to (S)-2,3-epoxysqualene, and is considered to be a rate-limiting enzyme in steroid biosynthesis. Can produce not only oxidosqualene, but also 2,3:22,23-dioxidosqualene. The protein is Squalene epoxidase 3 (SQE3) of Arabidopsis thaliana (Mouse-ear cress).